Consider the following 537-residue polypeptide: Cytochrome P450 monooxygenase claR (537 aa).

A helical membrane pass occupies residues 23–43 (VVTITEVALGIITLYLLGSYI). Cysteine 454 is a binding site for heme.

Belongs to the cytochrome P450 family. Requires heme as cofactor.

It localises to the membrane. It catalyses the reaction (2E)-geranylhydroquinone + reduced [NADPH--hemoprotein reductase] + O2 = wigandol + oxidized [NADPH--hemoprotein reductase] + 2 H2O + H(+). It functions in the pathway secondary metabolite biosynthesis; terpenoid biosynthesis. Functionally, cytochrome P450 monooxygenase; part of the gene cluster that mediates the biosynthesis of clavilactone A, a meroterpenoid that features a unique benzo-fused ten-membered carbocyclic ring unit with an alpha,beta-epoxy-gamma-lactone moiety, forming an intriguing 10/5/3 tricyclic nested skeleton. ClaR, ClaS and ClaT are sufficient to produce clavilactone A. ClaR acts as a macrocyclase to catalyze the oxidative cyclization of the isopentenyl to the nonterpenoid moieties to form the benzo-fused macrocycle, leading to wigantol. The biosynthesis begins with the prenyltransferase claS that transfers geranyl pyrophosphate (GPP) to hydroquinone to produces geranylhydroquinone. The cytochrome P450 monooxygenase claR then catalyzes the diradical coupling reaction between the intramolecular hydroquinone and allyl moieties to form the benzo-fused ten-membered carbocyclic ring unit of wigantol. Finally the cytochrome P450 monooxygenase claT exquisitely and stereoselectively assembles the alpha,beta-epoxy-gamma-lactone moiety, producing clavilactone A via arnebinol A. The sequence is that of Cytochrome P450 monooxygenase claR from Ampulloclitocybe clavipes (Club foot).